The following is a 296-amino-acid chain: MNTIEKPTEKAEILLEALPYIRRFYNRTVVIKYGGHAMVDDELKQSFAKDVLMMKYIGINPVVVHGGGPQIGSFLKKLGKDSKFIQGMRVTDEETMNIVEMVLVGKVNKEIVGLINHAGGKAVGLSGKDGSLIRAEKYYLSAEKAKDTPPEIIDIGLVGKVKEINADLITSLVRDGFIPVIAPTGAGDSGETYNINADIVAGAIAAALKAEKLILLTDVAGVLNKQGELINTMNNMEALEMIHEGVIEGGMFPKVKCCMKSLREGVRKAHIVDGRLKHAILLEMFTDKGIGTELVL.

Residues 67–68, arginine 89, and asparagine 194 each bind substrate; that span reads GG.

This sequence belongs to the acetylglutamate kinase family. ArgB subfamily.

The protein localises to the cytoplasm. It carries out the reaction N-acetyl-L-glutamate + ATP = N-acetyl-L-glutamyl 5-phosphate + ADP. It participates in amino-acid biosynthesis; L-arginine biosynthesis; N(2)-acetyl-L-ornithine from L-glutamate: step 2/4. In terms of biological role, catalyzes the ATP-dependent phosphorylation of N-acetyl-L-glutamate. This is Acetylglutamate kinase from Syntrophus aciditrophicus (strain SB).